A 151-amino-acid polypeptide reads, in one-letter code: MPTFKLVLSDPLSGKARQFEIKDPLAQRFVGLRIGEEIDGTVLKELIELPKGVKIRITGGSGVEGAPMHPGVPGPVKRYILADGPPGYRPRKRGMRKKKLVRGDTITDSIVQINAVLVYPEGYSGPPAIPLGAKELEKLKGGKTEEAAASQ.

Belongs to the eukaryotic ribosomal protein eS6 family.

The chain is Small ribosomal subunit protein eS6 from Pyrobaculum calidifontis (strain DSM 21063 / JCM 11548 / VA1).